A 191-amino-acid chain; its full sequence is Nucleoside triphosphate pyrophosphatase (191 aa).

Asp-70 functions as the Proton acceptor in the catalytic mechanism.

Belongs to the Maf family. A divalent metal cation serves as cofactor.

It localises to the cytoplasm. The enzyme catalyses a ribonucleoside 5'-triphosphate + H2O = a ribonucleoside 5'-phosphate + diphosphate + H(+). It carries out the reaction a 2'-deoxyribonucleoside 5'-triphosphate + H2O = a 2'-deoxyribonucleoside 5'-phosphate + diphosphate + H(+). Nucleoside triphosphate pyrophosphatase. May have a dual role in cell division arrest and in preventing the incorporation of modified nucleotides into cellular nucleic acids. The protein is Nucleoside triphosphate pyrophosphatase of Synechococcus sp. (strain WH7803).